Here is a 396-residue protein sequence, read N- to C-terminus: Lipid-A-disaccharide synthase (396 aa).

Belongs to the LpxB family.

It catalyses the reaction a lipid X + a UDP-2-N,3-O-bis[(3R)-3-hydroxyacyl]-alpha-D-glucosamine = a lipid A disaccharide + UDP + H(+). Its pathway is bacterial outer membrane biogenesis; LPS lipid A biosynthesis. Functionally, condensation of UDP-2,3-diacylglucosamine and 2,3-diacylglucosamine-1-phosphate to form lipid A disaccharide, a precursor of lipid A, a phosphorylated glycolipid that anchors the lipopolysaccharide to the outer membrane of the cell. This chain is Lipid-A-disaccharide synthase, found in Rhodopseudomonas palustris (strain BisB18).